We begin with the raw amino-acid sequence, 154 residues long: Endoribonuclease YbeY (154 aa).

3 residues coordinate Zn(2+): histidine 114, histidine 118, and histidine 124.

This sequence belongs to the endoribonuclease YbeY family. Requires Zn(2+) as cofactor.

The protein localises to the cytoplasm. In terms of biological role, single strand-specific metallo-endoribonuclease involved in late-stage 70S ribosome quality control and in maturation of the 3' terminus of the 16S rRNA. This is Endoribonuclease YbeY from Aggregatibacter actinomycetemcomitans (Actinobacillus actinomycetemcomitans).